The primary structure comprises 624 residues: Chaperone protein HtpG (624 aa).

Residues 1–336 (MKGQETRGFQ…SNDLPLNVSR (336 aa)) form an a; substrate-binding region. The tract at residues 337-552 (EILQDSTVTR…ADEMSTQMAK (216 aa)) is b. Residues 553–624 (LFAAAGQSVP…IRRMNQLLVS (72 aa)) are c.

The protein belongs to the heat shock protein 90 family. Homodimer.

The protein localises to the cytoplasm. Molecular chaperone. Has ATPase activity. The chain is Chaperone protein HtpG from Salmonella paratyphi A (strain ATCC 9150 / SARB42).